The chain runs to 504 residues: Maturase K (504 aa).

This sequence belongs to the intron maturase 2 family. MatK subfamily.

Its subcellular location is the plastid. The protein localises to the chloroplast. Functionally, usually encoded in the trnK tRNA gene intron. Probably assists in splicing its own and other chloroplast group II introns. This chain is Maturase K, found in Rorippa amphibia (Great yellow-cress).